The chain runs to 197 residues: Elongation factor Ts (197 aa).

An involved in Mg(2+) ion dislocation from EF-Tu region spans residues 81–84; it reads TDFV.

The protein belongs to the EF-Ts family.

The protein localises to the cytoplasm. Functionally, associates with the EF-Tu.GDP complex and induces the exchange of GDP to GTP. It remains bound to the aminoacyl-tRNA.EF-Tu.GTP complex up to the GTP hydrolysis stage on the ribosome. The polypeptide is Elongation factor Ts (Thermotoga neapolitana (strain ATCC 49049 / DSM 4359 / NBRC 107923 / NS-E)).